Consider the following 219-residue polypeptide: 2-hydroxy-3-keto-5-methylthiopentenyl-1-phosphate phosphatase (219 aa).

It belongs to the HAD-like hydrolase superfamily. MtnX family.

The enzyme catalyses 2-hydroxy-5-methylsulfanyl-3-oxopent-1-enyl phosphate + H2O = 1,2-dihydroxy-5-(methylsulfanyl)pent-1-en-3-one + phosphate. The protein operates within amino-acid biosynthesis; L-methionine biosynthesis via salvage pathway; L-methionine from S-methyl-5-thio-alpha-D-ribose 1-phosphate: step 4/6. Dephosphorylates 2-hydroxy-3-keto-5-methylthiopentenyl-1-phosphate (HK-MTPenyl-1-P) yielding 1,2-dihydroxy-3-keto-5-methylthiopentene (DHK-MTPene). The chain is 2-hydroxy-3-keto-5-methylthiopentenyl-1-phosphate phosphatase from Bacillus cytotoxicus (strain DSM 22905 / CIP 110041 / 391-98 / NVH 391-98).